Here is a 391-residue protein sequence, read N- to C-terminus: Polyisoprenyl-teichoic acid--peptidoglycan teichoic acid transferase TagV (391 aa).

The Cytoplasmic portion of the chain corresponds to 1-23; that stretch reads MAERVRVRVRKKKKSKRRKILKR. Residues 24–44 form a helical; Signal-anchor for type II membrane protein membrane-spanning segment; that stretch reads IMLLFALALLVVVGLGGYKLY. Residues 45–391 are Extracellular-facing; that stretch reads KTINAADESY…TTNSTTDSSY (347 aa). The segment at 329-391 is disordered; that stretch reads DYTPDTSTGT…TTNSTTDSSY (63 aa). A compositionally biased stretch (low complexity) spans 333–391; that stretch reads DTSTGTSGTEDGTDSSSSSGSTGSTGTTTDGTTNGSSYSNDSSTSSNNSTTNSTTDSSY.

This sequence belongs to the LytR/CpsA/Psr (LCP) family.

Its subcellular location is the cell membrane. Its pathway is cell wall biogenesis. Its function is as follows. May catalyze the final step in cell wall teichoic acid biosynthesis, the transfer of the anionic cell wall polymers (APs) from their lipid-linked precursor to the cell wall peptidoglycan (PG). The polypeptide is Polyisoprenyl-teichoic acid--peptidoglycan teichoic acid transferase TagV (Bacillus subtilis (strain 168)).